We begin with the raw amino-acid sequence, 1330 residues long: Ubinuclein-2 (1330 aa).

Residues 1–113 (MAEPRRVAFI…PPPRPPKETV (113 aa)) are disordered. Ser13 is subject to Phosphoserine. Composition is skewed to basic and acidic residues over residues 16–31 (RRREADFAGAEREPPR) and 55–67 (ARDKPLPQREVSR). A compositionally biased stretch (pro residues) spans 81 to 96 (PEPPPPPLPLQTPPPR). Position 229 is a phosphothreonine (Thr229). Position 236 is a phosphoserine (Ser236). Disordered stretches follow at residues 236–304 (SDTE…KKRY) and 322–345 (DALKKESTPKVPVIPSTSSLPKPP). At Thr238 the chain carries Phosphothreonine. A Glycyl lysine isopeptide (Lys-Gly) (interchain with G-Cter in SUMO2) cross-link involves residue Lys258. Ser297 carries the phosphoserine modification. A phosphoserine mark is found at Ser402, Ser405, Ser408, and Ser570. 7 disordered regions span residues 559 to 583 (LQADEEREKNGSDDDDDEKPGKRVI), 767 to 789 (NKGPSVSSRLNVPTTKPRPGLRE), 801 to 835 (LATPKKLDSPQTAHSSSLIAGHTGPVPKKPQDLAH), 866 to 909 (GLQR…SLTQ), 964 to 991 (YRLPLSTPSPGNGSQGSHPLVSRTAPST), 1021 to 1202 (PKLA…SSVV), and 1292 to 1330 (PGTQHAATLPHSPLPTHLQQAFNDGGQSKGDTKLPRKPQ). Over residues 560–570 (QADEEREKNGS) the composition is skewed to basic and acidic residues. Polar residues-rich tracts occupy residues 767–780 (NKGPSVSSRLNVPT) and 809–818 (SPQTAHSSSL). Low complexity predominate over residues 866 to 895 (GLQRSSQIHASSSQTHVSSSQAQAAASSHA). Composition is skewed to polar residues over residues 899–909 (SEAQDASSLTQ) and 969–980 (STPSPGNGSQGS). A compositionally biased stretch (pro residues) spans 1030–1044 (ATSPKPLTSPKPSVS). Over residues 1045 to 1056 (PKPSLSAKPSVS) the composition is skewed to low complexity. Lys1052 carries the N6-acetyllysine modification. Composition is skewed to polar residues over residues 1073 to 1148 (PSSS…NSLS), 1158 to 1169 (RGSNLNSSGANR), and 1308 to 1317 (HLQQAFNDGG). The residue at position 1107 (Ser1107) is a Phosphoserine. The residue at position 1132 (Lys1132) is an N6-acetyllysine. The span at 1321–1330 (GDTKLPRKPQ) shows a compositional bias: basic and acidic residues.

The protein belongs to the ubinuclein family.

This chain is Ubinuclein-2 (Ubn2), found in Rattus norvegicus (Rat).